The chain runs to 1017 residues: MLGLPNELSGSQVPGATEYEPGWRRVFKVEDLPGLGDYHIDNQTAVPTSIVCVIALAAAMDISNGKQANSIELYDVTIGRPIHLGTSPVEIETMIAIEPGKDGADSIQAEFSLNKSAGHDENPVSVANGRLRMTFAGHELELLSSRQAKPCGLRPVSISPFYDSLREVGLGYSGPFRALTSAERRMDYACGVIAPTTGEASRTPALLHPAMLEACFQTLLLAFAAPRDGSLWTIFVPTQIGRLTIFPNSSVGINTPASVTIDTHLHEFTAGHKADLPMIKGDVSVYSSEAGQLRIRLEGLTMSPIAPSTEKQDKRLYLKRTWLPDILSGPVLERGKPVFCYELFGLSLAPKSILAATRLLSHRYAKLKILQVGTSSVHLVHSLCRELGSSMDSYTIACESDSSMEDMRRRLLSDALPIKYVVLDIGKSLTEGDEPAAGEPTDLGSFDLIILLKASADDSPILKRTRGLIKPGGFLLMTVAATEAIPWEARDMTRKAIHDTLQSVGFSGVDLLQRDPEGDSSFVILSQAVDHQIRFLRAPFDSTPPFPTRGTLLVIGGASHRAKRPIETIQNSLRRVWAGEIVLIRSLTDLQTRGLDHVEAVLSLTELDQSVLENLSRDTFDGLHRLLHQSKIVLWVTYSAGNLNPHQSGAIGLVRAVQAETPDKVLQLLDVDQIDGNDGLVAESFLRLIGGVKMKDGSSNSLWTVEPELSVQGGRLLIPRVLFDKKRNDRLNCLRRQLKATDSFEKQSALARPIDPCSLFSPNKTYVLAGLSGQMGQSITRWIVQSGGRHIVITSRNPDKDDLWTKELEQRGAHIEIMAADVTKKQEMINVRNQILSAMPPIGGVANGAMLQSNCFFSDLTYEALQDVLKPKVDGSLVLDEVFSSDDLDFFLLFSSISAVVGQPFQANYDAANNFMTGLVLQRRARNLPASVINLGPIIGLGFIQNIDSGGGSEAVIATLRSLDYMLVSERELHHILAEAILIGKSDETPEIITGLETVSDNPAPFWHKSLLFSHII.

Residues 6 to 138 are N-terminal hotdog fold; it reads NELSGSQVPG…GRLRMTFAGH (133 aa). The region spanning 6–311 is the PKS/mFAS DH domain; sequence NELSGSQVPG…MSPIAPSTEK (306 aa). The dehydratase (DH) stretch occupies residues 8–306; the sequence is LSGSQVPGAT…LEGLTMSPIA (299 aa). The tract at residues 153 to 311 is C-terminal hotdog fold; sequence LRPVSISPFY…MSPIAPSTEK (159 aa). A ketoreductase (KR) region spans residues 532–720; the sequence is QIRFLRAPFD…VQGGRLLIPR (189 aa).

It carries out the reaction fumagillol + NADP(+) = 5-dehydrofumagillol + NADPH + H(+). It participates in secondary metabolite biosynthesis; terpenoid biosynthesis. Functionally, stereoselective keto-reductase; part of the gene cluster that mediates the biosynthesis of fumagillin, a meroterpenoid that has numerous biological activities including irreversible inhibition of human type 2 methionine aminopeptidase (METAP2). Within the pathway, the keto-reductase af490 acts as a 5-dehydrofumagillol 5-reductase that stereoselectively reduces 5-keto-fumagillol to 5R-hydroxy-seco-sesquiterpene. The pathway begins with the conversion of farnesyl pyrophosphate (FPP) to beta-trans-bergamotene by the membrane-bound beta-trans-bergamotene synthase af520. The multifunctional cytochrome P450 monooxygenase af510 then converts beta-trans-bergamotene into 5-keto-demethoxyfumagillol via several oxydation steps. 5-keto-demethoxyfumagillol is then subjected to successive C-6 hydroxylation and O-methylation by the dioxygenase af480 and O-methyltransferase af390-400, respectively, to yield 5-keto-fumagillol, which is then stereoselectively reduced by the keto-reductase af490 to 5R-hydroxy-seco-sesquiterpene. The next step is the polyketide transferase af380-catalyzed transfer of a dodecapentaenoyl group synthesized by the polyketide synthase af370 onto 5R-hydroxy-seco-sesquiterpene which leads to the production of prefumagillin. Finally, oxidative cleavage by the monooxygenase af470 converts prefumagillin to fumagillin. This chain is Stereoselective keto-reductase af490, found in Aspergillus fumigatus (strain ATCC MYA-4609 / CBS 101355 / FGSC A1100 / Af293) (Neosartorya fumigata).